The sequence spans 363 residues: MFCRSPFLGISSWSLASAALCPSSCSFPAGRDLRCDAAVPEVKWTAFVRTLVARPLSADDVRDFVSTFAHCRLALSWPVGAELRFATSDMLGITQAELAKLSRGYGCCPGMDLTVIGVTIFAEVSALVLVGECGEIYAFNGVFDDALYRLAEDAFGLWKHGLRRFEPVYGSKCLMETGASFFGGMSGVDDALAFAVSFDKALVPLPWPRGAFFEFAVPRRAEKRWRLIPGGGVAVVIGRFFGRGVTLPLLRRQRVLMDQVGRVYAASLDGGAVVRLSDSFRAFLAMGVRKLFKNHRFPPGHLWTMQLPVTCVHAPVINLPAVYQLSPHMVEREMSAVSCGASTVVRRDCEDTLRDGDAGVDTS.

The first 18 residues, 1–18 (MFCRSPFLGISSWSLASA), serve as a signal peptide directing secretion.

This is Protein U2 (U2) from Homo sapiens (Human).